Reading from the N-terminus, the 400-residue chain is Capsid protein (400 aa).

Polar residues predominate over residues Met-1 to Leu-10. Residues Met-1–Pro-54 are disordered. Acidic residues predominate over residues Ile-16 to Pro-28.

The protein belongs to the potexvirus capsid protein family.

It localises to the virion. Its function is as follows. Required for genome encapsidation. In Botryotinia fuckeliana (Noble rot fungus), this protein is Capsid protein (ORF3).